Consider the following 276-residue polypeptide: Undecaprenyl-diphosphatase (276 aa).

The next 5 helical transmembrane spans lie at 85 to 105 (MNVV…EKTI), 108 to 128 (VLFA…AILW), 187 to 207 (VATE…TLYE), 217 to 237 (VDSV…AFAC), and 253 to 273 (FAWY…SGWI).

Belongs to the UppP family.

The protein localises to the cell inner membrane. It carries out the reaction di-trans,octa-cis-undecaprenyl diphosphate + H2O = di-trans,octa-cis-undecaprenyl phosphate + phosphate + H(+). Catalyzes the dephosphorylation of undecaprenyl diphosphate (UPP). Confers resistance to bacitracin. In Burkholderia mallei (strain NCTC 10247), this protein is Undecaprenyl-diphosphatase.